A 76-amino-acid polypeptide reads, in one-letter code: Omega-conotoxin-like TxO1 (76 aa).

Residues 1-22 (MKLTCVVIVAVLFLTVWTFATA) form the signal peptide. The propeptide occupies 23 to 50 (DDSGNGLEKLFSNAHHEMKNPEASKLNE). Intrachain disulfides connect Cys52-Cys67, Cys59-Cys70, and Cys66-Cys75.

It belongs to the conotoxin O1 superfamily. In terms of tissue distribution, expressed by the venom duct.

It localises to the secreted. Omega-conotoxins act at presynaptic membranes, they bind and block voltage-gated calcium channels (Cav). The sequence is that of Omega-conotoxin-like TxO1 from Conus textile (Cloth-of-gold cone).